Here is a 299-residue protein sequence, read N- to C-terminus: Cysteine synthase B (299 aa).

The residue at position 45 (Lys-45) is an N6-(pyridoxal phosphate)lysine. Residues Asn-75, 178–182 (GTTGT), and Ser-259 contribute to the pyridoxal 5'-phosphate site.

Belongs to the cysteine synthase/cystathionine beta-synthase family. Pyridoxal 5'-phosphate serves as cofactor.

It carries out the reaction O-acetyl-L-serine + hydrogen sulfide = L-cysteine + acetate. The protein operates within amino-acid biosynthesis; L-cysteine biosynthesis; L-cysteine from L-serine: step 2/2. In Pseudomonas aeruginosa (strain ATCC 15692 / DSM 22644 / CIP 104116 / JCM 14847 / LMG 12228 / 1C / PRS 101 / PAO1), this protein is Cysteine synthase B (cysM).